The chain runs to 226 residues: X-linked lymphocyte-regulated protein 3A (226 aa).

Basic and acidic residues predominate over residues 1 to 18; it reads MSSRERKATDTAGRHSRM. Residues 1-72 form a disordered region; the sequence is MSSRERKATD…QDLVQEFEEP (72 aa). Polar residues predominate over residues 21 to 30; it reads NLSSDDSQNP. Composition is skewed to basic and acidic residues over residues 39-48 and 56-65; these read EVLDAGREDI and QQARKEKQDL. Residues 155–210 are a coiled coil; the sequence is ETLTLQKNRMEEFKSLCEKYLEKLEVLRDSRGNSIAEELRRLIATLEIKLLMLHNQ.

The protein belongs to the XLR/SYCP3 family. In terms of tissue distribution, expressed in lymphoid cells.

The chain is X-linked lymphocyte-regulated protein 3A (Xlr3a) from Mus musculus (Mouse).